The sequence spans 1139 residues: Phospholipid-transporting ATPase tat-1 (1139 aa).

A run of 3 helical transmembrane segments spans residues 78–98 (YTTA…EIFE), 276–296 (IIFL…GSEI), and 318–338 (SFLW…PISL). D388 functions as the 4-aspartylphosphate intermediate in the catalytic mechanism. Helical transmembrane passes span 831 to 851 (ICLY…GQTI), 855 to 875 (WTIG…LGLF), 901 to 921 (IGNF…LFFL), 935 to 955 (GLTG…VATV), 972 to 992 (VACI…SLVF), and 1013 to 1033 (YTFW…DLVI).

Belongs to the cation transport ATPase (P-type) (TC 3.A.3) family. Type IV subfamily.

It localises to the cell membrane. It is found in the early endosome membrane. The protein resides in the recycling endosome membrane. It catalyses the reaction ATP + H2O + phospholipidSide 1 = ADP + phosphate + phospholipidSide 2.. The enzyme catalyses a 1,2-diacyl-sn-glycero-3-phospho-L-serine(out) + ATP + H2O = a 1,2-diacyl-sn-glycero-3-phospho-L-serine(in) + ADP + phosphate + H(+). In terms of biological role, transports phosphatidylserine from the outer to the inner leaflet of the plasma membrane, thereby maintaining the enrichment of this phospholipid in the inner leaflet. Ectopic exposure of phosphatidylserine on the cell surface may result in removal of living cells by neighboring phagocytes. Regulation of the phosphatidylserine distribution in plasma membranes is likely to help in the maintenance and control of the membrane surface charge. Plays a role in the formation of the tubular membrane structure and in membrane trafficking and is specifically involved in the recycling and degradation of endocytic cargo, likely with its chaperone protein chat-1. This chain is Phospholipid-transporting ATPase tat-1 (tat-1), found in Caenorhabditis elegans.